Consider the following 432-residue polypeptide: MANVVVVGTQWGDEGKGKIVDRYAEDAKVIARFQGGNNAGHTLVVKGEQTILHLIPSGILHNHKVCIIGNGVVVDPLVLIQEIESLKGRGLFPPDTRLFVSEKAHVIMPYHRQLDLARETRRSGVKIGTTGRGIGPAYEDKISRVGIRICDLLDETLFREKLALNVEEKNFTLTSLFGEPPVQEQEIFDEYQNYAEKIRSYAADTSLILEREMKLGKPILFEGAQGCHLDIEHGTYPFVTSSSTVAGNASCGTGIGPSSLNEVIGICKAYTTRVGEGPFLTELNDEIGDRLQRVGQEFGATTGRRRRCGWLDMVLVRHAVRVSGITGLAITKLDVLTGLKTLKLCVGYQSGNDLYPESVPPNPRILQQCQPVYEEMAGWTEDIRGARQMDDLPSNARRYLERLESLTGVPVILVSVGAGREETIVLKNPFSS.

GTP-binding positions include 12–18 (GDEGKGK) and 40–42 (GHT). The active-site Proton acceptor is the Asp-13. 2 residues coordinate Mg(2+): Asp-13 and Gly-40. IMP-binding positions include 13-16 (DEGK), 38-41 (NAGH), Thr-130, Arg-144, Gln-225, Thr-240, and Arg-304. His-41 acts as the Proton donor in catalysis. 300 to 306 (ATTGRRR) serves as a coordination point for substrate. GTP contacts are provided by residues Arg-306, 332-334 (KLD), and 415-417 (SVG).

Belongs to the adenylosuccinate synthetase family. As to quaternary structure, homodimer. It depends on Mg(2+) as a cofactor.

It is found in the cytoplasm. The enzyme catalyses IMP + L-aspartate + GTP = N(6)-(1,2-dicarboxyethyl)-AMP + GDP + phosphate + 2 H(+). The protein operates within purine metabolism; AMP biosynthesis via de novo pathway; AMP from IMP: step 1/2. Its function is as follows. Plays an important role in the de novo pathway of purine nucleotide biosynthesis. Catalyzes the first committed step in the biosynthesis of AMP from IMP. The protein is Adenylosuccinate synthetase of Syntrophus aciditrophicus (strain SB).